A 669-amino-acid polypeptide reads, in one-letter code: Polyamine deacetylase HDAC10 (669 aa).

The interval 1–323 (MGTALVYHED…VCMTVQTLLG (323 aa)) is histone deacetylase. Residue Asp20 participates in substrate binding. Residues 21-24 (PECE) carry the Substrate specificity motif. His135 (proton donor/acceptor) is an active-site residue. Asp172, His174, and Asp265 together coordinate Zn(2+). Tyr305 provides a ligand contact to substrate. The span at 361–373 (DVTAVPMSPSSHS) shows a compositional bias: polar residues. The tract at residues 361-387 (DVTAVPMSPSSHSPEGRPPPLLPGGPV) is disordered. A Phosphoserine modification is found at Ser393.

Belongs to the histone deacetylase family. HD type 2 subfamily. In terms of assembly, interacts with HDAC3. Interacts with HDAC2 and NCOR2/SMRT. Interacts with HSPA8/HSC70. Interacts with MSH2. In terms of tissue distribution, widely expressed with high levels in liver and kidney.

Its subcellular location is the cytoplasm. The protein resides in the nucleus. The catalysed reaction is N(8)-acetylspermidine + H2O = spermidine + acetate. It carries out the reaction N-acetylputrescine + H2O = putrescine + acetate. The enzyme catalyses N-acetylcadaverine + H2O = cadaverine + acetate. It catalyses the reaction N(6)-acetyl-L-lysyl-[protein] + H2O = L-lysyl-[protein] + acetate. Polyamine deacetylase (PDAC), which acts preferentially on N(8)-acetylspermidine, and also on acetylcadaverine and acetylputrescine. Exhibits attenuated catalytic activity toward N(1),N(8)-diacetylspermidine and very low activity, if any, toward N(1)-acetylspermidine. Histone deacetylase activity has been observed in vitro. Has also been shown to be involved in MSH2 deacetylation. The physiological relevance of protein/histone deacetylase activity is unclear and could be very weak. May play a role in the promotion of late stages of autophagy, possibly autophagosome-lysosome fusion and/or lysosomal exocytosis in neuroblastoma cells. May play a role in homologous recombination. May promote DNA mismatch repair. The polypeptide is Polyamine deacetylase HDAC10 (HDAC10) (Homo sapiens (Human)).